A 433-amino-acid chain; its full sequence is tRNA(Ile)-lysidine synthase (433 aa).

Residue 37 to 42 participates in ATP binding; it reads SGGKDS.

This sequence belongs to the tRNA(Ile)-lysidine synthase family.

Its subcellular location is the cytoplasm. The catalysed reaction is cytidine(34) in tRNA(Ile2) + L-lysine + ATP = lysidine(34) in tRNA(Ile2) + AMP + diphosphate + H(+). In terms of biological role, ligates lysine onto the cytidine present at position 34 of the AUA codon-specific tRNA(Ile) that contains the anticodon CAU, in an ATP-dependent manner. Cytidine is converted to lysidine, thus changing the amino acid specificity of the tRNA from methionine to isoleucine. The polypeptide is tRNA(Ile)-lysidine synthase (Leptospira interrogans serogroup Icterohaemorrhagiae serovar copenhageni (strain Fiocruz L1-130)).